Consider the following 288-residue polypeptide: 33 kDa chaperonin (288 aa).

2 disulfide bridges follow: C235-C237 and C268-C271.

This sequence belongs to the HSP33 family. Post-translationally, under oxidizing conditions two disulfide bonds are formed involving the reactive cysteines. Under reducing conditions zinc is bound to the reactive cysteines and the protein is inactive.

The protein resides in the cytoplasm. In terms of biological role, redox regulated molecular chaperone. Protects both thermally unfolding and oxidatively damaged proteins from irreversible aggregation. Plays an important role in the bacterial defense system toward oxidative stress. The polypeptide is 33 kDa chaperonin (Streptococcus suis (strain 98HAH33)).